A 610-amino-acid polypeptide reads, in one-letter code: MNSQDLKKRQEKIRNFSIIAHIDHGKSTLADRILEKTETVSSREMQAQLLDSMDLERERGITIKLNAIELNYTAKDGETYIFHLIDTPGHVDFTYEVSRSLAACEGAILVVDAAQGIEAQTLANVYLALDNDLEILPVINKIDLPAADPERVRHEVEDVIGLDASEAVLASAKAGIGIEEILEQIVEKVPAPTGDVDAPLQALIFDSVYDAYRGVILQVRIVNGIVKPGDKIQMMSNGKTFDVTEVGIFTPKAVGRDFLATGDVGYVAASIKTVADTRVGDTVTLANNPAKEALHGYKQMNPMVFAGIYPIESNKYNDLREALEKLQLNDASLQFEPETSQALGFGFRCGFLGLLHMDVIQERLEREFNIDLIMTAPSVVYHVHTTDEDMIEVSNPSEFPDPTRVAFIEEPYVKAQIMVPQEFVGAVMELSQRKRGDFVTMDYIDDNRVNVIYQIPLAEIVFDFFDKLKSSTRGYASFDYDMSEYRRSQLVKMDILLNGDKVDALSFIVHKEFAYERGKIIVEKLKKIIPRQQFEVPIQAAIGQKIVARSDIKALRKNVLAKCYGGDVSRKRKLLEKQKAGKKRMKAIGSVEVPQEAFLSVLSMDDDAKK.

Positions 11 to 193 (EKIRNFSIIA…QIVEKVPAPT (183 aa)) constitute a tr-type G domain. GTP-binding positions include 23-28 (DHGKST) and 140-143 (NKID).

It belongs to the TRAFAC class translation factor GTPase superfamily. Classic translation factor GTPase family. LepA subfamily.

The protein localises to the cell membrane. It catalyses the reaction GTP + H2O = GDP + phosphate + H(+). Its function is as follows. Required for accurate and efficient protein synthesis under certain stress conditions. May act as a fidelity factor of the translation reaction, by catalyzing a one-codon backward translocation of tRNAs on improperly translocated ribosomes. Back-translocation proceeds from a post-translocation (POST) complex to a pre-translocation (PRE) complex, thus giving elongation factor G a second chance to translocate the tRNAs correctly. Binds to ribosomes in a GTP-dependent manner. The polypeptide is Elongation factor 4 (Streptococcus pyogenes serotype M12 (strain MGAS9429)).